The following is a 133-amino-acid chain: Peptide methionine sulfoxide reductase MsrB (133 aa).

Basic and acidic residues predominate over residues 1–12 (MSEKVQKSEHEW). Residues 1–36 (MSEKVQKSEHEWQQQLTPEQYRVTREKGTERPFTGD) are disordered. Positions 9–132 (EHEWQQQLTP…NSVSLDFHPG (124 aa)) constitute a MsrB domain. 4 residues coordinate Zn(2+): Cys48, Cys51, Cys97, and Cys100. Cys121 acts as the Nucleophile in catalysis.

The protein belongs to the MsrB Met sulfoxide reductase family. Zn(2+) is required as a cofactor.

The enzyme catalyses L-methionyl-[protein] + [thioredoxin]-disulfide + H2O = L-methionyl-(R)-S-oxide-[protein] + [thioredoxin]-dithiol. The chain is Peptide methionine sulfoxide reductase MsrB from Chromohalobacter salexigens (strain ATCC BAA-138 / DSM 3043 / CIP 106854 / NCIMB 13768 / 1H11).